Consider the following 216-residue polypeptide: 3-isopropylmalate dehydratase small subunit (216 aa).

This sequence belongs to the LeuD family. LeuD type 1 subfamily. As to quaternary structure, heterodimer of LeuC and LeuD.

It catalyses the reaction (2R,3S)-3-isopropylmalate = (2S)-2-isopropylmalate. It participates in amino-acid biosynthesis; L-leucine biosynthesis; L-leucine from 3-methyl-2-oxobutanoate: step 2/4. Its function is as follows. Catalyzes the isomerization between 2-isopropylmalate and 3-isopropylmalate, via the formation of 2-isopropylmaleate. The chain is 3-isopropylmalate dehydratase small subunit from Acidovorax ebreus (strain TPSY) (Diaphorobacter sp. (strain TPSY)).